The primary structure comprises 1373 residues: Inactive tyrosine-protein kinase PRAG1 (1373 aa).

2 disordered regions span residues 31–50 (AGHPKARANSLPAGTRLPAR) and 197–235 (TSSCPKGPRPCTSPQPLRESLPSEDDSDQRCSPSGDSEG). Y238 carries the phosphotyrosine modification. Basic and acidic residues-rich tracts occupy residues 250 to 263 (DAVHSTEGSGRRGG) and 272 to 284 (QGPRTRPTEEEKQ). A disordered region spans residues 250–338 (DAVHSTEGSG…SGASSPFAPH (89 aa)). Over residues 317–333 (SSSDGLSCGSSRSGASS) the composition is skewed to low complexity. Phosphotyrosine occurs at positions 343 and 391. Disordered stretches follow at residues 376-448 (QPAS…NPAP) and 468-794 (IYLS…LPQK). Residues 419–438 (SQGQVWTGDTWIQKTPPSWS) show a composition bias toward polar residues. Over residues 506 to 522 (RESHPHNVTENTAKEKP) the composition is skewed to basic and acidic residues. A compositionally biased stretch (low complexity) spans 526-538 (PKLSKSSPGGSPV). 2 stretches are compositionally biased toward polar residues: residues 568–578 (NLTSSCHTNGV) and 655–670 (TSGQNSKTNSGMSKSA). Phosphoserine occurs at positions 671 and 720. 2 stretches are compositionally biased toward polar residues: residues 711–721 (VSQSSAESLSP) and 729–740 (SFTTGSTDSLAS). S757 and S802 each carry phosphoserine. The segment at 804–823 (PDGFFWTQGSPKPRTASPKL) is disordered. Residues 911–954 (STQLQLHSLLSSISSKEGTYAKLGGLYTQSLARLVTKCEDLFMG) form a required for homodimerization region. Positions 945–1296 (VTKCEDLFMG…EAKRVLQCLL (352 aa)) constitute a Protein kinase domain. Polar residues predominate over residues 1041 to 1050 (LASPDTSSKD). Disordered regions lie at residues 1041–1062 (LASPDTSSKDTAPAVSPQPPAQ) and 1138–1171 (QSSPGPSATPTVPTTTSRCPSAAPAATTACQGGP). The span at 1139 to 1167 (SSPGPSATPTVPTTTSRCPSAAPAATTAC) shows a compositional bias: low complexity. Residues 1298–1373 (GPRRELVEQP…LQSLKLLQLL (76 aa)) form a required for homodimerization region.

This sequence belongs to the protein kinase superfamily. As to quaternary structure, homodimer. Dimerization leads to the catalytic activation of CSK. Interacts (via C-terminus) with RND2. Interacts with CSK (via SH2 domain) in a Tyr-391 phosphorylation-dependent manner; this interaction potentiates kinase activity of CSK. Interacts with NOTCH1 intracellular domain (N1ICD). Forms a complex with PRAG1, N1ICD and MAML1, in a MAML1-dependent manner. Phosphorylated by CSK on Tyr-238, Tyr-343, and Tyr-391; Tyr-391 is a primary site of phosphorylation.

It localises to the cytoplasm. Its subcellular location is the nucleus. The protein localises to the cell junction. It is found in the focal adhesion. Catalytically inactive protein kinase that acts as a scaffold protein. Functions as an effector of the small GTPase RND2, which stimulates RhoA activity and inhibits NGF-induced neurite outgrowth. Promotes Src family kinase (SFK) signaling by regulating the subcellular localization of CSK, a negative regulator of these kinases, leading to the regulation of cell morphology and motility by a CSK-dependent mechanism. Acts as a critical coactivator of Notch signaling. This chain is Inactive tyrosine-protein kinase PRAG1, found in Mus musculus (Mouse).